Consider the following 311-residue polypeptide: uncharacterized protein (311 aa).

The next 10 helical transmembrane spans lie at 13–33 (STAV…GFFS), 41–61 (FELV…CWLA), 76–96 (LQTL…FKSF), 103–123 (IAIS…SFFY), 128–148 (NVIS…ISGI), 157–177 (LMGS…FTTL), 192–212 (FLQT…GAFA), 218–238 (NWIM…LLFF), 248–268 (FISI…TVFT), and 272–292 (PDLY…LTLV). EamA domains follow at residues 24–147 (VIFG…LISG) and 166–292 (VLAA…LTLV).

This sequence belongs to the EamA transporter family.

It localises to the cell membrane. This is an uncharacterized protein from Bacillus subtilis (strain 168).